A 72-amino-acid polypeptide reads, in one-letter code: MSKHKHEWTESVANSGPASILSYCASSILMTVTNKFVVNLDNFNMNFVMLFVQSLVCTVTLCILRIVGVANF.

Residues 1-12 (MSKHKHEWTESV) lie on the Cytoplasmic side of the membrane. A helical transmembrane segment spans residues 13–32 (ANSGPASILSYCASSILMTV). The Lumenal portion of the chain corresponds to 33–46 (TNKFVVNLDNFNMN). A helical transmembrane segment spans residues 47–69 (FVMLFVQSLVCTVTLCILRIVGV). The Cytoplasmic segment spans residues 70–72 (ANF).

It belongs to the TPT transporter family. SLC35D subfamily.

Its subcellular location is the membrane. This is an uncharacterized protein from Saccharomyces cerevisiae (strain RM11-1a) (Baker's yeast).